The sequence spans 673 residues: Zinc finger and BTB domain-containing protein 16 (673 aa).

The region spanning 34 to 96 (CDVVIMVDSQ…AYTATLQAKA (63 aa)) is the BTB domain. A phosphoserine; by PDPK1 mark is found at Ser76, Ser184, and Ser197. The interval 200–300 (KAAVDSLMTI…SARELHYGRE (101 aa)) is interaction with RUNX1T1. Disordered stretches follow at residues 215–236 (QGTL…GRHP) and 249–332 (DEVP…KHLG). Residue Ser256 is modified to Phosphoserine; by PDPK1. Phosphothreonine; by PDPK1 is present on Thr282. 2 stretches are compositionally biased toward basic and acidic residues: residues 293–302 (RELHYGREES) and 319–331 (RPEH…EKHL). 8 consecutive C2H2-type zinc fingers follow at residues 404–426 (EQCS…RKLH), 432–454 (YGCE…LLAH), 461–483 (FVCD…RQTH), 490–512 (VFCL…MEVH), 518–540 (YICS…LRSH), 546–568 (YECE…KRIH), 574–596 (YECN…YRVH), and 602–624 (FECK…LRTH). Ser628 carries the post-translational modification Phosphoserine; by PDPK1. The C2H2-type 9 zinc finger occupies 630–652 (YQCTICTEYCPSLSSMQKHMKGH).

The protein belongs to the krueppel C2H2-type zinc-finger protein family. As to quaternary structure, binds EPN1. Interacts with ZBTB32 and CUL3. Interacts with ATP7B. Interacts with transcriptional corepressor RUNX1T1 (via its N-terminus); the interaction increases the transcription repression activity of ZBTB16. Interacts (via C2H2-type zinc finger domains 1 and 2) with RNF112. In terms of tissue distribution, within the hematopoietic system, PLZF is expressed in bone marrow, early myeloid cell lines and peripheral blood mononuclear cells. Also expressed in the ovary, and at lower levels, in the kidney and lung.

The protein resides in the nucleus. It is found in the nuclear body. It participates in protein modification; protein ubiquitination. In terms of biological role, acts as a transcriptional repressor. Transcriptional repression may be mediated through recruitment of histone deacetylases to target promoters. May play a role in myeloid maturation and in the development and/or maintenance of other differentiated tissues. Probable substrate-recognition component of an E3 ubiquitin-protein ligase complex which mediates the ubiquitination and subsequent proteasomal degradation of target proteins. The sequence is that of Zinc finger and BTB domain-containing protein 16 (ZBTB16) from Homo sapiens (Human).